Reading from the N-terminus, the 234-residue chain is Urease accessory protein UreF (234 aa).

It belongs to the UreF family. As to quaternary structure, ureD, UreF and UreG form a complex that acts as a GTP-hydrolysis-dependent molecular chaperone, activating the urease apoprotein by helping to assemble the nickel containing metallocenter of UreC. The UreE protein probably delivers the nickel.

The protein resides in the cytoplasm. Its function is as follows. Required for maturation of urease via the functional incorporation of the urease nickel metallocenter. This chain is Urease accessory protein UreF, found in Azoarcus sp. (strain BH72).